The sequence spans 462 residues: MTTAKSMEKIVALAKSRGFIFPGSEIYGGLANTWDYGPLGVELKNNVKKAWWKKFIQQSPYNVGLDSAILMNPTTWEASGHIGGFSDPLMDCKKCRARFRADKLIEDHFAKDGEDTIVDGWSNEQMASFIDEKAIVCPECDAKEFTDIRQFNLMFKTHQGVNEDTSTEIFLRPETAQGIFVNFKNVQRTARKKIPFGIGQIGKSFRNEITPGNYTFRTREFEQMELEFFCKPGDDLEWFDYWSNFCKKWLLDLSMKETSIRLRAHTEEELSHYSNATTDIEFKFPFGWGELWGIADRTDFDLKQHTEHSGVQLIYQDPVTNEKYVPYCIEPSLGADRVTLAFLVDAYEEEQIDEKDSRIVLKLHPALAPFKAAVLPLTKKLKEQSLELFEKLSDKFMIDYDDAGSIGKRYRRHDEIGTPYCITYDFDTLEDNCVTVRDRDTMEQQRVAIDELEVFLEEKIKF.

2 residues coordinate substrate: R100 and E174. ATP is bound by residues 206–208, 216–221, 290–291, and 334–337; these read RNE, FRTREF, EL, and GADR. 221 to 225 provides a ligand contact to substrate; the sequence is FEQME. 330-334 is a binding site for substrate; it reads EPSLG.

The protein belongs to the class-II aminoacyl-tRNA synthetase family. As to quaternary structure, homodimer.

It localises to the cytoplasm. The catalysed reaction is tRNA(Gly) + glycine + ATP = glycyl-tRNA(Gly) + AMP + diphosphate. Functionally, catalyzes the attachment of glycine to tRNA(Gly). This chain is Glycine--tRNA ligase, found in Alkaliphilus metalliredigens (strain QYMF).